The sequence spans 115 residues: Holo-[acyl-carrier-protein] synthase (115 aa).

2 residues coordinate Mg(2+): Asp-8 and Glu-56.

It belongs to the P-Pant transferase superfamily. AcpS family. Mg(2+) serves as cofactor.

It localises to the cytoplasm. The enzyme catalyses apo-[ACP] + CoA = holo-[ACP] + adenosine 3',5'-bisphosphate + H(+). Transfers the 4'-phosphopantetheine moiety from coenzyme A to a Ser of acyl-carrier-protein. This Ureaplasma parvum serovar 3 (strain ATCC 27815 / 27 / NCTC 11736) protein is Holo-[acyl-carrier-protein] synthase.